A 221-amino-acid chain; its full sequence is MDYRNQSLGALAIAIPQATKLFRQHQLDFCCGGKQTLLRAANKLNLDIDALEAQLSALQTEPHSSEDWQQQPLTNLISFIISRYHDRHREQLPELVLMAEKVERVHGEKPTCPRGLAAELSAILEELTQHMYKEEQILFPMIQRGMGSQASGPIFVMEAEHDAVGQQLEVVKQLTQNVTPPEGACNTWRALYTGINEFITDLMEHIHLENNLLFPRALRGE.

Belongs to the RIC family. YtfE subfamily. In terms of assembly, homodimer.

Its subcellular location is the cytoplasm. Di-iron-containing protein involved in the repair of iron-sulfur clusters damaged by oxidative and nitrosative stress conditions. The sequence is that of Iron-sulfur cluster repair protein YtfE from Yersinia pseudotuberculosis serotype IB (strain PB1/+).